We begin with the raw amino-acid sequence, 246 residues long: Small ribosomal subunit protein uS2 (246 aa).

Belongs to the universal ribosomal protein uS2 family. As to quaternary structure, component of the small ribosomal subunit. Mature ribosomes consist of a small (40S) and a large (60S) subunit. The 40S subunit contains about 33 different proteins and 1 molecule of RNA (18S). The 60S subunit contains about 49 different proteins and 3 molecules of RNA (25S, 5.8S and 5S). Interacts with ribosomal protein S21.

The protein localises to the cytoplasm. Required for the assembly and/or stability of the 40S ribosomal subunit. Required for the processing of the 20S rRNA-precursor to mature 18S rRNA in a late step of the maturation of 40S ribosomal subunits. The sequence is that of Small ribosomal subunit protein uS2 from Leishmania infantum.